A 142-amino-acid polypeptide reads, in one-letter code: Cytidine deaminase (142 aa).

The 131-residue stretch at 9-139 folds into the CMP/dCMP-type deaminase domain; sequence RQLEALKRAA…ELLPMAFGPS (131 aa). Substrate is bound at residue 50 to 52; it reads NVE. Zn(2+) is bound at residue Cys-61. The Proton donor role is filled by Glu-63. Zn(2+) contacts are provided by Cys-96 and Cys-99.

This sequence belongs to the cytidine and deoxycytidylate deaminase family. In terms of assembly, homodimer. Zn(2+) serves as cofactor.

The enzyme catalyses cytidine + H2O + H(+) = uridine + NH4(+). It carries out the reaction 2'-deoxycytidine + H2O + H(+) = 2'-deoxyuridine + NH4(+). Functionally, this enzyme scavenges exogenous and endogenous cytidine and 2'-deoxycytidine for UMP synthesis. The sequence is that of Cytidine deaminase (CDD1) from Saccharomyces cerevisiae (strain ATCC 204508 / S288c) (Baker's yeast).